A 91-amino-acid polypeptide reads, in one-letter code: C-C motif chemokine 5 (91 aa).

The first 23 residues, methionine 1–alanine 23, serve as a signal peptide directing secretion. 2 disulfides stabilise this stretch: cysteine 33/cysteine 57 and cysteine 34/cysteine 73.

This sequence belongs to the intercrine beta (chemokine CC) family.

The protein resides in the secreted. Its function is as follows. Chemoattractant for blood monocytes, memory T-helper cells and eosinophils. Causes the release of histamine from basophils and activates eosinophils. May activate several chemokine receptors including CCR1, CCR3, CCR4 and CCR5. May also be an agonist of the G protein-coupled receptor GPR75. Together with GPR75, may play a role in neuron survival through activation of a downstream signaling pathway involving the PI3, Akt and MAP kinases. By activating GPR75 may also play a role in insulin secretion by islet cells. This is C-C motif chemokine 5 (CCL5) from Sigmodon hispidus (Hispid cotton rat).